A 223-amino-acid polypeptide reads, in one-letter code: Probable transaldolase (223 aa).

Lys-91 serves as the catalytic Schiff-base intermediate with substrate.

Belongs to the transaldolase family. Type 3B subfamily.

The protein localises to the cytoplasm. The enzyme catalyses D-sedoheptulose 7-phosphate + D-glyceraldehyde 3-phosphate = D-erythrose 4-phosphate + beta-D-fructose 6-phosphate. The protein operates within carbohydrate degradation; pentose phosphate pathway; D-glyceraldehyde 3-phosphate and beta-D-fructose 6-phosphate from D-ribose 5-phosphate and D-xylulose 5-phosphate (non-oxidative stage): step 2/3. Its function is as follows. Transaldolase is important for the balance of metabolites in the pentose-phosphate pathway. This is Probable transaldolase from Prosthecochloris aestuarii (strain DSM 271 / SK 413).